Reading from the N-terminus, the 147-residue chain is Large ribosomal subunit protein bL9 (147 aa).

Belongs to the bacterial ribosomal protein bL9 family.

Its function is as follows. Binds to the 23S rRNA. This Clostridium botulinum (strain 657 / Type Ba4) protein is Large ribosomal subunit protein bL9.